The sequence spans 530 residues: Cytochrome P450 78A6 (530 aa).

The helical transmembrane segment at 25-45 threads the bilayer; the sequence is LAFSLLAVTIIWLAISLFLWT. Cys474 is a heme binding site.

It belongs to the cytochrome P450 family. Heme is required as a cofactor. As to expression, expressed in leaves, sepals, petals, stamens, carpels and developing ovules.

Its subcellular location is the membrane. Its function is as follows. Plays a role in seed and fruit development. Functions probably in association with CYP78A9 in the regulation of seed growth. Acts maternally to promote seed growth. This is Cytochrome P450 78A6 (CYP78A6) from Arabidopsis thaliana (Mouse-ear cress).